A 253-amino-acid chain; its full sequence is MSTHRLVMVRHGESTWNQENRFCGWFDAELSEKGAEEAKKAAQAIKDAKMEFDICYTSVLKRAIRTLWTILDGTDQMWLPVVRTWRLNERHYGGLTGLNKAETAAKHGEEQVKIWRRSFDIPPPPMDEKHPYYKSISKERRYAGLKAGELPTCESLKDTIARALPFWNDEIAPQIKAGKRVLIAAHGNSLRGIVKHLEGMSDQAIMELNLPTGIPIVYELDQALKPTKPMRFLGDEETVRKAMEAVAAQGKAK.

Thr-3 is modified (phosphothreonine). Substrate-binding positions include 10-17 (RHGESTWN), 23-24 (CG), Arg-62, 89-92 (ERHY), Lys-100, and 116-117 (RR). The active-site Tele-phosphohistidine intermediate is the His-11. Ser-14 carries the phosphoserine modification. Residue Glu-89 is the Proton donor/acceptor of the active site. Ser-118 carries the phosphoserine modification. Phosphotyrosine is present on residues Tyr-132 and Tyr-133. Ser-135 is subject to Phosphoserine. Thr-152 carries the post-translational modification Phosphothreonine. Substrate is bound at residue 187–188 (GN).

Belongs to the phosphoglycerate mutase family. BPG-dependent PGAM subfamily. In terms of assembly, homodimer.

It catalyses the reaction (2R)-2-phosphoglycerate = (2R)-3-phosphoglycerate. It carries out the reaction (2R)-3-phospho-glyceroyl phosphate = (2R)-2,3-bisphosphoglycerate + H(+). Its function is as follows. Interconversion of 3- and 2-phosphoglycerate with 2,3-bisphosphoglycerate as the primer of the reaction. Can also catalyze the reaction of EC 5.4.2.4 (synthase), but with a reduced activity. This is Phosphoglycerate mutase 2 (PGAM2) from Bos taurus (Bovine).